The chain runs to 1673 residues: Protein TIC 214 (1673 aa).

6 consecutive transmembrane segments (helical) span residues 18-38 (IINS…FSIG), 67-87 (FITG…HLAL), 90-110 (PHTI…CNTH), 127-147 (LSIQ…HFIL), 175-195 (VGWI…VVWI), and 218-238 (SMSI…YYLG).

This sequence belongs to the TIC214 family. Part of the Tic complex.

Its subcellular location is the plastid. The protein localises to the chloroplast inner membrane. Functionally, involved in protein precursor import into chloroplasts. May be part of an intermediate translocation complex acting as a protein-conducting channel at the inner envelope. This is Protein TIC 214 from Lactuca sativa (Garden lettuce).